The following is a 478-amino-acid chain: MKMSIRTPPRLLELAGRSVLRDQALAMSTLEELPTELFPPLFMEAFSRRRCEALKLMVQAWPFRRLPLRPLIKMPCLETFQAVLNGLDALLTHGVRPRRWKLQVLDLQDVCENFWMVWSEAMARGCFLNAKRNKKPVQDCPRMRGRQPLTVFVELWLKNRTLDEHLTCLLLWVKQRKDLLHLCCKKLKILGMPFRNIRSILKMVNLDCIQEVEVNCKWVLPILTQFTPYLGHMRNLQKLVLSHMDVSRYVSPEQKKEIVTQFTTQFLKLHCLQKLYMNSVSFLEGHLDQLLSCLKTSLKVLTITNCVLLESDLKHLSQCPSISQLKTLDLSGIRLTNYSLVPLQILLEKVAATLEYLDLDDCGIIDSQVNAILPALSRCFELNTFSFCGNPISMATLENLLSHTIILKNLCLELYPAPRESYGADGTLCWSRFTQIRAELMKRVRDLRHPKRILFGTDYCPDCGNRSFYDLEADQYCC.

The LRR 1; degenerate repeat unit spans residues 99–126 (RWKLQVLDLQDVCENFWMVWSEAMARGC). One copy of the LRR 2; degenerate repeat lies at 181 to 205 (HLCCKKLKILGMPFRNIRSILKMVN). The stretch at 206 to 232 (LDCIQEVEVNCKWVLPILTQFTPYLGH) is one LRR 3; degenerate repeat. An LRR 4; degenerate repeat occupies 233–268 (MRNLQKLVLSHMDVSRYVSPEQKKEIVTQFTTQFLK). LRR repeat units follow at residues 269–294 (LHCL…LSCL), 295–326 (KTSL…SQLK), 327–347 (TLDL…QILL), 351–378 (AATL…ALSR), and 379–403 (CFEL…LLSH).

This sequence belongs to the PRAME family.

The sequence is that of PRAME family member 26 from Homo sapiens (Human).